Reading from the N-terminus, the 301-residue chain is NADH-cytochrome b5 reductase 2 (301 aa).

The chain crosses the membrane as a helical span at residues 14-30 (FLVPFAGATALSIGLAL). The 105-residue stretch at 51-155 (NEWVDLKLSK…KGPIVKWKWE (105 aa)) folds into the FAD-binding FR-type domain. FAD is bound at residue 158–193 (QFKSIALIGGGTGITPLYQLLHQITSNPKDNTKVNL).

This sequence belongs to the flavoprotein pyridine nucleotide cytochrome reductase family. Requires FAD as cofactor.

It localises to the mitochondrion outer membrane. It catalyses the reaction 2 Fe(III)-[cytochrome b5] + NADH = 2 Fe(II)-[cytochrome b5] + NAD(+) + H(+). In terms of biological role, may mediate the reduction of outer membrane cytochrome b5. This is NADH-cytochrome b5 reductase 2 (MCR1) from Candida albicans (strain SC5314 / ATCC MYA-2876) (Yeast).